The primary structure comprises 766 residues: Nucleolar complex protein 2 (766 aa).

Over residues 1-12 (MKLATKKIKTLG) the composition is skewed to basic residues. Disordered regions lie at residues 1-73 (MKLA…EELE), 100-154 (DTDD…DEED), and 674-766 (KTGV…LNEW). Over residues 14–29 (SKPDLSKKKPAKDAIR) the composition is skewed to basic and acidic residues. Residues 33-42 (PQTTSETKVT) show a composition bias toward polar residues. Basic residues predominate over residues 58 to 67 (KTTKKGFKKS). Residues 100–115 (DTDDDDDEEGDEEDKE) show a composition bias toward acidic residues. Threonine 101 carries the phosphothreonine modification. Over residues 130-140 (EKYHKPSKDLE) the composition is skewed to basic and acidic residues. A compositionally biased stretch (acidic residues) spans 141-154 (VASDESDFEVDEED). Phosphoserine is present on residues serine 143, serine 146, serine 691, serine 693, and serine 705. The segment covering 706–720 (DDDDDEDVQEEEEVE) has biased composition (acidic residues). The span at 757–766 (IVKDLDLNEW) shows a compositional bias: basic and acidic residues.

It belongs to the NOC2 family.

The protein localises to the nucleus. The polypeptide is Nucleolar complex protein 2 (Drosophila melanogaster (Fruit fly)).